The sequence spans 45 residues: Large ribosomal subunit protein bL34 (45 aa).

This sequence belongs to the bacterial ribosomal protein bL34 family.

The protein is Large ribosomal subunit protein bL34 of Arthrobacter sp. (strain FB24).